Consider the following 311-residue polypeptide: Pyrimidine-specific ribonucleoside hydrolase RihA (311 aa).

Residue H240 is part of the active site.

Belongs to the IUNH family. RihA subfamily.

Its function is as follows. Hydrolyzes with equal efficiency cytidine or uridine to ribose and cytosine or uracil, respectively. The polypeptide is Pyrimidine-specific ribonucleoside hydrolase RihA (Escherichia coli (strain SMS-3-5 / SECEC)).